The chain runs to 165 residues: Nucleotide-binding protein RoseRS_0530 (165 aa).

This sequence belongs to the YajQ family.

Nucleotide-binding protein. The chain is Nucleotide-binding protein RoseRS_0530 from Roseiflexus sp. (strain RS-1).